The primary structure comprises 344 residues: L-rhamnose-proton symporter (344 aa).

10 helical membrane-spanning segments follow: residues 4-24 (AITM…CFYA), 38-58 (WSVG…ALLL), 68-88 (FSLS…IGNI), 101-121 (MGIG…TPII), 137-157 (TLLG…AGQL), 175-195 (LVLA…MNAA), 214-234 (LPSY…FCFI), 259-279 (VLLS…YAWG), 290-310 (ISWM…GLVL), and 323-343 (VLSL…IGMA).

It belongs to the L-rhamnose transporter (TC 2.A.7.6) family.

It is found in the cell inner membrane. It carries out the reaction L-rhamnopyranose(in) + H(+)(in) = L-rhamnopyranose(out) + H(+)(out). In terms of biological role, uptake of L-rhamnose across the cytoplasmic membrane with the concomitant transport of protons into the cell (symport system). The polypeptide is L-rhamnose-proton symporter (Shigella flexneri).